The sequence spans 328 residues: Pleckstrin homology domain protein OPY1 (328 aa).

Positions Asn-19–His-52 are disordered. Residues Pro-24–Asn-41 show a composition bias toward polar residues. The segment at Ala-213–Ile-328 is required for targeting to the cell membrane. In terms of domain architecture, PH spans His-215–Leu-318.

As to quaternary structure, interacts with MSS4 (via N-terminus); to negatively regulate MSS4 kinase activity.

The protein localises to the cell membrane. It localises to the cytoplasm. Binds phosphatidylinositol 4,5-bisphosphate (PtdIns(4,5)P2/PIP2) at the cell membrane. Negatively regulates the activity of phosphatidylinositol 4-phosphate 5-kinase MSS4. The polypeptide is Pleckstrin homology domain protein OPY1 (OPY1) (Saccharomyces cerevisiae (strain ATCC 204508 / S288c) (Baker's yeast)).